The sequence spans 443 residues: Na(+)-translocating NADH-quinone reductase subunit A (443 aa).

It belongs to the NqrA family. As to quaternary structure, composed of six subunits; NqrA, NqrB, NqrC, NqrD, NqrE and NqrF.

The enzyme catalyses a ubiquinone + n Na(+)(in) + NADH + H(+) = a ubiquinol + n Na(+)(out) + NAD(+). NQR complex catalyzes the reduction of ubiquinone-1 to ubiquinol by two successive reactions, coupled with the transport of Na(+) ions from the cytoplasm to the periplasm. NqrA to NqrE are probably involved in the second step, the conversion of ubisemiquinone to ubiquinol. The protein is Na(+)-translocating NADH-quinone reductase subunit A of Mannheimia succiniciproducens (strain KCTC 0769BP / MBEL55E).